Consider the following 674-residue polypeptide: DNA ligase (674 aa).

NAD(+) contacts are provided by residues 34–38 (DADFD), 82–83 (SL), and E107. The N6-AMP-lysine intermediate role is filled by K109. Positions 130, 170, 286, and 310 each coordinate NAD(+). The Zn(2+) site is built by C404, C407, C423, and C429. One can recognise a BRCT domain in the interval 593 to 674 (KPAQTLEGIT…FTRLLETGEA (82 aa)).

This sequence belongs to the NAD-dependent DNA ligase family. LigA subfamily. Mg(2+) is required as a cofactor. It depends on Mn(2+) as a cofactor.

The enzyme catalyses NAD(+) + (deoxyribonucleotide)n-3'-hydroxyl + 5'-phospho-(deoxyribonucleotide)m = (deoxyribonucleotide)n+m + AMP + beta-nicotinamide D-nucleotide.. Functionally, DNA ligase that catalyzes the formation of phosphodiester linkages between 5'-phosphoryl and 3'-hydroxyl groups in double-stranded DNA using NAD as a coenzyme and as the energy source for the reaction. It is essential for DNA replication and repair of damaged DNA. This Corynebacterium aurimucosum (strain ATCC 700975 / DSM 44827 / CIP 107346 / CN-1) (Corynebacterium nigricans) protein is DNA ligase.